A 720-amino-acid polypeptide reads, in one-letter code: MRIGKSSGWLNESVSLEYEHVSPPTRPRDTRRRPRAASDGGLAHLHRRLAVGYAEDTPRTGARSPAPRRPLPVAPASAPPAPSLVPEPPMPVSLPVVSSPRFSAGSSAAITDPFSSLPPTPVLYAMARELKALSDATWQPAVPLPAEPPTDARRGNTVFDEASASSPVIASACPQAFASPPRAPRSARARRARTGGDAWPAPTFLSRPSSSRIGRDVFGKLVALGYSREQIRKLKQESLSEIAKYHTTLTGQGFTHADICRISRRRQSLRVVARNYPELAAALPELTRAHIVDIARQRSGDLALQALLPVATALTAAPLRLSASQIATVAQYGERPAIQALYRLRRKLTRAPLHLTPQQVVAIASHDGGKPALEAVWAKLPVLRGVPYALSTAQVVAIACISGQQALEAIEAHMPTLRQAPHSLSPERVAAIACIGGRSAVEAVRQGLPVKAIRRIRREKAPVAGPPPASLGPTPQELVAVLHFFRAHQQPRQAFVDALAAFQTTRPALLRLLSSVGVTEIEALGGTIPDATERWQRLLGRLGFRPATGAAAPSPDSLQGFAQSLERTLGSPGMAGQSACSPHRKRPAETAIAPRSIRRRPNNAGQPSEPWPDQLAWLQRRKRTARSHIRADSAASVPANLHLGTRAQFTPDRLRAEPGPIMQAHTSPASVSFGSHVAFEPGLPDPGTPTSADLASFEAEPFGVGPLDFHLDWLLQILEA.

2 disordered regions span residues 13-85 (SVSL…PSLV) and 175-205 (QAFA…PTFL). A compositionally biased stretch (pro residues) spans 67 to 85 (PRRPLPVAPASAPPAPSLV). Positions 185 to 191 (RSARARR) match the Nuclear localization signal 1 motif. One copy of the Cryptic repeat -1 repeat lies at 286–320 (LTRAHIVDIARQRSGDLALQALLPVATALTAAPLR). The stretch at 321–354 (LSASQIATVAQYGERPAIQALYRLRRKLTRAPLH) is one Cryptic repeat 0 repeat. The Core repeat 1 repeat unit spans residues 355 to 389 (LTPQQVVAIASHDGGKPALEAVWAKLPVLRGVPYA). A Cryptic repeat +1 repeat occupies 390–423 (LSTAQVVAIACISGQQALEAIEAHMPTLRQAPHS). One copy of the Cryptic repeat +2 repeat lies at 424-457 (LSPERVAAIACIGGRSAVEAVRQGLPVKAIRRIR). 3 consecutive short sequence motifs (nuclear localization signal) follow at residues 455 to 458 (RIRR), 583 to 586 (HRKR), and 620 to 623 (RRKR). The tract at residues 571–611 (SPGMAGQSACSPHRKRPAETAIAPRSIRRRPNNAGQPSEPW) is disordered.

It belongs to the transcription activator-like effector (TALE) family. RipTAL/RTL subfamily.

The protein resides in the secreted. It localises to the host nucleus. In terms of biological role, does not activate plant gene transcription, because it has too few core repeats. This Ralstonia solanacearum (Pseudomonas solanacearum) protein is TAL effector protein Rip19.